Reading from the N-terminus, the 159-residue chain is Phosphopantetheine adenylyltransferase (159 aa).

A substrate-binding site is contributed by S8. ATP-binding positions include 8 to 9 (SF) and H16. Residues K40, L72, and R86 each contribute to the substrate site. ATP contacts are provided by residues 87–89 (GLR), E97, and 122–128 (YSFISSS).

It belongs to the bacterial CoaD family. In terms of assembly, homohexamer. Requires Mg(2+) as cofactor.

It is found in the cytoplasm. The enzyme catalyses (R)-4'-phosphopantetheine + ATP + H(+) = 3'-dephospho-CoA + diphosphate. It functions in the pathway cofactor biosynthesis; coenzyme A biosynthesis; CoA from (R)-pantothenate: step 4/5. In terms of biological role, reversibly transfers an adenylyl group from ATP to 4'-phosphopantetheine, yielding dephospho-CoA (dPCoA) and pyrophosphate. The polypeptide is Phosphopantetheine adenylyltransferase (Thermosipho melanesiensis (strain DSM 12029 / CIP 104789 / BI429)).